The sequence spans 214 residues: UBX domain-containing protein 10 (214 aa).

Over residues 1–13 (MHVTRPKSSKGRS) the composition is skewed to basic residues. A disordered region spans residues 1 to 79 (MHVTRPKSSK…AYDRPPEEPV (79 aa)). Positions 16-25 (MITNSSMIYT) are enriched in polar residues. A compositionally biased stretch (low complexity) spans 49–60 (SLRSRAILRRSS). Positions 127 to 204 (PEESDLLLAI…GVLNKSVLCI (78 aa)) constitute a UBX domain.

Belongs to the UBXN10 family.

The protein localises to the cell projection. Its subcellular location is the cilium. Required for ciliogenesis. Acts as a tethering factor that facilitates recruitment of vcp/p97 to the intraflagellar transport complex B (IFT-B) in cilia. The sequence is that of UBX domain-containing protein 10 from Danio rerio (Zebrafish).